Here is a 39-residue protein sequence, read N- to C-terminus: Photosystem II reaction center protein J (39 aa).

Residues 7–27 (IPLWIVAVVAGLGVITVVGLF) traverse the membrane as a helical segment.

The protein belongs to the PsbJ family. As to quaternary structure, PSII is composed of 1 copy each of membrane proteins PsbA, PsbB, PsbC, PsbD, PsbE, PsbF, PsbH, PsbI, PsbJ, PsbK, PsbL, PsbM, PsbT, PsbX, PsbY, PsbZ, Psb30/Ycf12, peripheral proteins PsbO, CyanoQ (PsbQ), PsbU, PsbV and a large number of cofactors. It forms dimeric complexes.

It is found in the cellular thylakoid membrane. Functionally, one of the components of the core complex of photosystem II (PSII). PSII is a light-driven water:plastoquinone oxidoreductase that uses light energy to abstract electrons from H(2)O, generating O(2) and a proton gradient subsequently used for ATP formation. It consists of a core antenna complex that captures photons, and an electron transfer chain that converts photonic excitation into a charge separation. This is Photosystem II reaction center protein J from Synechococcus sp. (strain JA-2-3B'a(2-13)) (Cyanobacteria bacterium Yellowstone B-Prime).